Consider the following 105-residue polypeptide: Iron-sulfur cluster assembly protein CyaY (105 aa).

Belongs to the frataxin family.

Its function is as follows. Involved in iron-sulfur (Fe-S) cluster assembly. May act as a regulator of Fe-S biogenesis. The sequence is that of Iron-sulfur cluster assembly protein CyaY from Psychromonas ingrahamii (strain DSM 17664 / CCUG 51855 / 37).